The chain runs to 500 residues: Inner membrane transporter YjeM (500 aa).

Residues Met1 to Leu10 are Cytoplasmic-facing. Residues Ile11–Phe31 traverse the membrane as a helical segment. Residues Tyr32 to Ser37 lie on the Periplasmic side of the membrane. Residues Ala38–Ala58 form a helical membrane-spanning segment. Residues Glu59 to Tyr83 lie on the Cytoplasmic side of the membrane. The helical transmembrane segment at Ala84–Ala104 threads the bilayer. Over Lys105 to Arg124 the chain is Periplasmic. Residues Ile125–Val145 form a helical membrane-spanning segment. At Thr146–Gly163 the chain is on the cytoplasmic side. The chain crosses the membrane as a helical span at residues Gly164–Leu184. Residues Asn185 to Met209 lie on the Periplasmic side of the membrane. A helical membrane pass occupies residues Leu210–Val230. Over Asp231–Gly243 the chain is Cytoplasmic. Residues Ile244–Val264 form a helical membrane-spanning segment. Residues Ser265 to Val308 lie on the Periplasmic side of the membrane. Residues Gly309–Phe329 traverse the membrane as a helical segment. Residues Thr330–Pro361 lie on the Cytoplasmic side of the membrane. A helical membrane pass occupies residues Ala362 to Gly382. At Gly383–Thr394 the chain is on the periplasmic side. The chain crosses the membrane as a helical span at residues Leu395 to Phe415. At Lys416–Ser433 the chain is on the cytoplasmic side. The helical transmembrane segment at Thr434–Ile454 threads the bilayer. At Gln455–Asp462 the chain is on the periplasmic side. A helical transmembrane segment spans residues Trp463–Ile483. Over Tyr484–Glu500 the chain is Cytoplasmic.

It belongs to the amino acid-polyamine-organocation (APC) superfamily.

It is found in the cell inner membrane. This chain is Inner membrane transporter YjeM (yjeM), found in Salmonella typhi.